We begin with the raw amino-acid sequence, 1483 residues long: ABC multidrug transporter atrA (1483 aa).

Over residues 1 to 19 (MASHKKSEDPLVVKDRQEQ) the composition is skewed to basic and acidic residues. Residues 1–92 (MASHKKSEDP…NDPAVDPQGP (92 aa)) form a disordered region. Residue Asn32 is glycosylated (N-linked (GlcNAc...) asparagine). The segment covering 71 to 82 (PTRTSTLATISE) has biased composition (polar residues). Asn123 and Asn322 each carry an N-linked (GlcNAc...) asparagine glycan. The ABC transporter 1 domain occupies 147-398 (FRIGEMMKNR…FERQGWECPQ (252 aa)). The next 5 helical transmembrane spans lie at 512 to 532 (TVST…VFYG), 539 to 559 (GFTA…LIAM), 595 to 615 (IPVK…LAGL), 620 to 640 (GQFF…SAVF), and 654 to 674 (MGLA…VLPV). A glycan (N-linked (GlcNAc...) asparagine) is linked at Asn718. Residues 759–779 (FGILIAFLVGFMMIYFIATEL) traverse the membrane as a helical segment. N-linked (GlcNAc...) asparagine glycosylation is present at Asn780. An ABC transporter 2 domain is found at 840–1083 (FTWRDVCYDI…LLNYFESNGA (244 aa)). Residue 876–883 (GVSGAGKT) coordinates ATP. Asn947 and Asn1146 each carry an N-linked (GlcNAc...) asparagine glycan. The next 5 helical transmembrane spans lie at 1179-1199 (YIAS…FSFF), 1215-1235 (LFML…LFVT), 1254-1274 (AFLI…GILT), 1293-1313 (LVLL…HMAI), and 1320-1340 (ETAS…CGVM). An N-linked (GlcNAc...) asparagine glycan is attached at Asn1413. Residues 1444-1464 (FGLMWVYIVFNIFLATMLYYT) traverse the membrane as a helical segment. Asn1471 is a glycosylation site (N-linked (GlcNAc...) asparagine).

This sequence belongs to the ABC transporter superfamily. ABCG family. PDR (TC 3.A.1.205) subfamily.

It localises to the cell membrane. The enzyme catalyses (R)-miconazole(in) + ATP + H2O = (R)-miconazole(out) + ADP + phosphate + H(+). Pleiotropic ABC efflux transporter involved in the basal level of azole susceptibility. Confers resistance to miconazole and clotrimazole. The chain is ABC multidrug transporter atrA from Aspergillus oryzae (strain ATCC 42149 / RIB 40) (Yellow koji mold).